The following is a 146-amino-acid chain: Ribosome-binding factor A (146 aa).

A disordered region spans residues arginine 125–glutamate 146.

Belongs to the RbfA family. As to quaternary structure, monomer. Binds 30S ribosomal subunits, but not 50S ribosomal subunits or 70S ribosomes.

It localises to the cytoplasm. Its function is as follows. One of several proteins that assist in the late maturation steps of the functional core of the 30S ribosomal subunit. Associates with free 30S ribosomal subunits (but not with 30S subunits that are part of 70S ribosomes or polysomes). Required for efficient processing of 16S rRNA. May interact with the 5'-terminal helix region of 16S rRNA. The protein is Ribosome-binding factor A of Mesorhizobium japonicum (strain LMG 29417 / CECT 9101 / MAFF 303099) (Mesorhizobium loti (strain MAFF 303099)).